The chain runs to 339 residues: UDP-N-acetylenolpyruvoylglucosamine reductase (339 aa).

Residues 19–189 (VDVQARLFAE…LRVRFKLSRV (171 aa)) enclose the FAD-binding PCMH-type domain. The active site involves R166. The active-site Proton donor is the S239. E335 is a catalytic residue.

It belongs to the MurB family. It depends on FAD as a cofactor.

Its subcellular location is the cytoplasm. The catalysed reaction is UDP-N-acetyl-alpha-D-muramate + NADP(+) = UDP-N-acetyl-3-O-(1-carboxyvinyl)-alpha-D-glucosamine + NADPH + H(+). It participates in cell wall biogenesis; peptidoglycan biosynthesis. Its function is as follows. Cell wall formation. In Pseudomonas savastanoi pv. phaseolicola (strain 1448A / Race 6) (Pseudomonas syringae pv. phaseolicola (strain 1448A / Race 6)), this protein is UDP-N-acetylenolpyruvoylglucosamine reductase.